Consider the following 233-residue polypeptide: Proteasome subunit beta type-6 (233 aa).

Residues 1-12 (MDLNLDAPHSMG) constitute a propeptide, removed in mature form. Catalysis depends on T13, which acts as the Nucleophile.

Belongs to the peptidase T1B family. Component of the 20S core complex of the 26S proteasome. The 26S proteasome is composed of a core protease (CP), known as the 20S proteasome, capped at one or both ends by the 19S regulatory particle (RP/PA700). The 20S proteasome core is composed of 28 subunits that are arranged in four stacked rings, resulting in a barrel-shaped structure. The two end rings are each formed by seven alpha subunits, and the two central rings are each formed by seven beta subunits. The catalytic chamber with the active sites is on the inside of the barrel.

It localises to the cytoplasm. It is found in the nucleus. It catalyses the reaction Cleavage of peptide bonds with very broad specificity.. Functionally, the proteasome is a multicatalytic proteinase complex which is characterized by its ability to cleave peptides with Arg, Phe, Tyr, Leu, and Glu adjacent to the leaving group at neutral or slightly basic pH. The proteasome has an ATP-dependent proteolytic activity. The protein is Proteasome subunit beta type-6 (PBA1) of Arabidopsis thaliana (Mouse-ear cress).